Consider the following 214-residue polypeptide: Pyridoxine/pyridoxamine 5'-phosphate oxidase (214 aa).

Residues 8 to 11 (RTNY) and K66 each bind substrate. FMN contacts are provided by residues 61 to 66 (RIVLIK), 76 to 77 (FT), R82, K83, and Q105. Substrate contacts are provided by Y123, R127, and S131. FMN is bound by residues 140-141 (QS) and W184. 190-192 (RLH) contacts substrate. Residue R194 participates in FMN binding.

It belongs to the pyridoxamine 5'-phosphate oxidase family. Homodimer. The cofactor is FMN.

The enzyme catalyses pyridoxamine 5'-phosphate + O2 + H2O = pyridoxal 5'-phosphate + H2O2 + NH4(+). It catalyses the reaction pyridoxine 5'-phosphate + O2 = pyridoxal 5'-phosphate + H2O2. Its pathway is cofactor metabolism; pyridoxal 5'-phosphate salvage; pyridoxal 5'-phosphate from pyridoxamine 5'-phosphate: step 1/1. The protein operates within cofactor metabolism; pyridoxal 5'-phosphate salvage; pyridoxal 5'-phosphate from pyridoxine 5'-phosphate: step 1/1. Catalyzes the oxidation of either pyridoxine 5'-phosphate (PNP) or pyridoxamine 5'-phosphate (PMP) into pyridoxal 5'-phosphate (PLP). This is Pyridoxine/pyridoxamine 5'-phosphate oxidase from Burkholderia mallei (strain NCTC 10247).